The sequence spans 142 residues: uncharacterized protein (142 aa).

Helical transmembrane passes span 12-29 and 44-66; these read NAIL…YGLL and IYGQ…GVTA.

Its subcellular location is the cell membrane. This is an uncharacterized protein from Archaeoglobus fulgidus (strain ATCC 49558 / DSM 4304 / JCM 9628 / NBRC 100126 / VC-16).